Consider the following 186-residue polypeptide: MRVGVLSFQGGVVEHLEHIEKLNGKPVKVRSLEDLQKIDRLIIPGGESTTIGKFLKQSNMLQPLREKIYGGMPVWGTCAGMILLARKIENSEVNYINAIDITVRRNAYGSQVDSFNTKALIEEISLNEMPLVFIRAPYITRIGETVKALCTIDKNIVAAKSNNVLVTSFHPELADNLEFHEYFMKL.

46–48 (GES) lines the L-glutamine pocket. Cysteine 78 functions as the Nucleophile in the catalytic mechanism. Residues arginine 105 and 134–135 (IR) each bind L-glutamine. Catalysis depends on charge relay system residues histidine 170 and glutamate 172.

The protein belongs to the glutaminase PdxT/SNO family. In terms of assembly, in the presence of PdxS, forms a dodecamer of heterodimers. Only shows activity in the heterodimer.

The catalysed reaction is aldehydo-D-ribose 5-phosphate + D-glyceraldehyde 3-phosphate + L-glutamine = pyridoxal 5'-phosphate + L-glutamate + phosphate + 3 H2O + H(+). It carries out the reaction L-glutamine + H2O = L-glutamate + NH4(+). It functions in the pathway cofactor biosynthesis; pyridoxal 5'-phosphate biosynthesis. Functionally, catalyzes the hydrolysis of glutamine to glutamate and ammonia as part of the biosynthesis of pyridoxal 5'-phosphate. The resulting ammonia molecule is channeled to the active site of PdxS. The sequence is that of Pyridoxal 5'-phosphate synthase subunit PdxT from Clostridium acetobutylicum (strain ATCC 824 / DSM 792 / JCM 1419 / IAM 19013 / LMG 5710 / NBRC 13948 / NRRL B-527 / VKM B-1787 / 2291 / W).